A 548-amino-acid chain; its full sequence is Flagellin (548 aa).

The protein belongs to the bacterial flagellin family.

It localises to the secreted. The protein resides in the bacterial flagellum. Functionally, flagellin is the subunit protein which polymerizes to form the filaments of bacterial flagella. This chain is Flagellin (fliC), found in Escherichia coli O127:H6 (strain E2348/69 / EPEC).